A 494-amino-acid chain; its full sequence is UDP-N-acetylmuramoyl-L-alanyl-D-glutamate--L-lysine ligase (494 aa).

S30 provides a ligand contact to UDP-N-acetyl-alpha-D-muramoyl-L-alanyl-D-glutamate. 110-116 provides a ligand contact to ATP; the sequence is GTNGKTS. UDP-N-acetyl-alpha-D-muramoyl-L-alanyl-D-glutamate is bound by residues 152–153, S179, and R187; that span reads TT. At K219 the chain carries N6-carboxylysine. Residues 406–409 carry the L-lysine recognition motif motif; sequence DNPA.

This sequence belongs to the MurCDEF family. MurE subfamily. Post-translationally, carboxylation is probably crucial for Mg(2+) binding and, consequently, for the gamma-phosphate positioning of ATP.

The protein localises to the cytoplasm. It catalyses the reaction UDP-N-acetyl-alpha-D-muramoyl-L-alanyl-D-glutamate + L-lysine + ATP = UDP-N-acetyl-alpha-D-muramoyl-L-alanyl-gamma-D-glutamyl-L-lysine + ADP + phosphate + H(+). It functions in the pathway cell wall biogenesis; peptidoglycan biosynthesis. Its function is as follows. Catalyzes the addition of L-lysine to the nucleotide precursor UDP-N-acetylmuramoyl-L-alanyl-D-glutamate (UMAG) in the biosynthesis of bacterial cell-wall peptidoglycan. The protein is UDP-N-acetylmuramoyl-L-alanyl-D-glutamate--L-lysine ligase of Staphylococcus aureus (strain Mu3 / ATCC 700698).